A 341-amino-acid chain; its full sequence is MNIVVEFFVVTFKVLWAFVLAAARWLVRPKEKSVAGQVCLITGAGSGLGRLFALEFARRRALLVLWDINTQSNEETAGMVRHIYRDLEAADAAALQAGNGEEEILPHCNLQVFTYTCDVGKRENVYLTAERVRKEVGEVSVLVNNAGVVSGHHLLECPDELIERTMMVNCHAHFWTTKAFLPTMLEINHGHIVTVASSLGLFSTAGVEDYCASKFGVVGFHESLSHELKAAEKDGIKTTLVCPYLVDTGMFRGCRIRKEIEPFLPPLKPDYCVKQAMKAILTDQPMICTPRLMYIVTFMKSILPFEAVVCMYRFLGADKCMYPFIAQRKQATNNNEAKNGI.

The helical; Signal-anchor transmembrane segment at 3–23 threads the bilayer; the sequence is IVVEFFVVTFKVLWAFVLAAA. 40-64 contacts NADP(+); sequence LITGAGSGLGRLFALEFARRRALLV. Ser197 lines the substrate pocket. The active-site Proton acceptor is Tyr210.

It belongs to the short-chain dehydrogenases/reductases (SDR) family. As to expression, detected in retinal pigment epithelium (at protein level). Detected in retina, retinal pigment epithelium, and at lower levels in cornea, liver, kidney, pancreas, lung, brain and skeletal muscle.

It is found in the microsome membrane. The protein resides in the endoplasmic reticulum membrane. It carries out the reaction all-trans-retinol + NADP(+) = all-trans-retinal + NADPH + H(+). Its pathway is cofactor metabolism; retinol metabolism. Its function is as follows. Retinol dehydrogenase with a clear preference for NADP. Converts all-trans-retinol to all-trans-retinal. Has no detectable activity towards 11-cis-retinol, 9-cis-retinol and 13-cis-retinol. The chain is Retinol dehydrogenase 10 (RDH10) from Bos taurus (Bovine).